A 466-amino-acid chain; its full sequence is Asparagine--tRNA ligase (466 aa).

Belongs to the class-II aminoacyl-tRNA synthetase family. As to quaternary structure, homodimer.

Its subcellular location is the cytoplasm. The enzyme catalyses tRNA(Asn) + L-asparagine + ATP = L-asparaginyl-tRNA(Asn) + AMP + diphosphate + H(+). This chain is Asparagine--tRNA ligase, found in Vibrio vulnificus (strain YJ016).